Here is a 287-residue protein sequence, read N- to C-terminus: Zinc finger protein SNAI3 (287 aa).

The SNAG domain stretch occupies residues 1-20; that stretch reads MPRSFLVKTHSSHRVPNYGK. C2H2-type zinc fingers lie at residues 147-169, 178-200, 204-226, and 232-254; these read FECIHCHRPYHTLAGLARHQQLH, FTCRYCDKEYASLGALKMHIRTH, CICKVCGKAFSRPWLLQGHIRTH, and YTCSHCSRAFADRSNLRAHLQTH. A C2H2-type 5; degenerate zinc finger spans residues 260–282; that stretch reads YRCAVCPKAFSRMSLLARHEEAG.

It belongs to the snail C2H2-type zinc-finger protein family. In terms of tissue distribution, highly expressed in skeletal muscle and thymus. Lower expression in heart, lung and spleen.

It is found in the nucleus. Functionally, seems to inhibit myoblast differentiation. Transcriptional repressor of E-box-dependent transactivation of downstream myogenic bHLHs genes. Binds preferentially to the canonical E-box sequences 5'-CAGGTG-3' and 5'-CACCTG-3'. The polypeptide is Zinc finger protein SNAI3 (Snai3) (Mus musculus (Mouse)).